The sequence spans 96 residues: Ferredoxin-1 (96 aa).

In terms of domain architecture, 2Fe-2S ferredoxin-type spans 1–95 (MKVIINGKEF…DCDEIVIESE (95 aa)). The [2Fe-2S] cluster site is built by Cys34, Cys39, Cys42, and Cys78. Residues Cys52 and Cys87 are joined by a disulfide bond.

Belongs to the 2Fe2S plant-type ferredoxin family. [2Fe-2S] cluster serves as cofactor.

Functionally, ferredoxins are iron-sulfur proteins that transfer electrons in a wide variety of metabolic reactions. The chain is Ferredoxin-1 (fdx1) from Aquifex aeolicus (strain VF5).